The primary structure comprises 498 residues: UDP-N-acetylmuramoyl-L-alanyl-D-glutamate--2,6-diaminopimelate ligase (498 aa).

Ser29 contacts UDP-N-acetyl-alpha-D-muramoyl-L-alanyl-D-glutamate. Gly120 to Ser126 contributes to the ATP binding site. Residues Thr162–Thr163, Ser189, Gln195, and Arg197 each bind UDP-N-acetyl-alpha-D-muramoyl-L-alanyl-D-glutamate. An N6-carboxylysine modification is found at Lys229. Meso-2,6-diaminopimelate contacts are provided by residues Arg392, Asp416–Arg419, Gly466, and Glu470. A Meso-diaminopimelate recognition motif motif is present at residues Asp416–Arg419.

This sequence belongs to the MurCDEF family. MurE subfamily. Mg(2+) serves as cofactor. In terms of processing, carboxylation is probably crucial for Mg(2+) binding and, consequently, for the gamma-phosphate positioning of ATP.

It localises to the cytoplasm. It catalyses the reaction UDP-N-acetyl-alpha-D-muramoyl-L-alanyl-D-glutamate + meso-2,6-diaminopimelate + ATP = UDP-N-acetyl-alpha-D-muramoyl-L-alanyl-gamma-D-glutamyl-meso-2,6-diaminopimelate + ADP + phosphate + H(+). Its pathway is cell wall biogenesis; peptidoglycan biosynthesis. In terms of biological role, catalyzes the addition of meso-diaminopimelic acid to the nucleotide precursor UDP-N-acetylmuramoyl-L-alanyl-D-glutamate (UMAG) in the biosynthesis of bacterial cell-wall peptidoglycan. The protein is UDP-N-acetylmuramoyl-L-alanyl-D-glutamate--2,6-diaminopimelate ligase of Alkalilimnicola ehrlichii (strain ATCC BAA-1101 / DSM 17681 / MLHE-1).